Reading from the N-terminus, the 619-residue chain is Tyrosine-protein kinase ZAP-70 (619 aa).

The SH2 1 domain occupies 10-102 (FFYGSISRAE…GLPCNLRKPC (93 aa)). An interdomain A region spans residues 103-162 (NRPSGLEPQPGVFDCLRDAMVRDYVRQTWKLEGEALEQAIISQAPQVEKLIATTAHERMP). Residues 163 to 254 (WYHSSLTREE…GLIYCLKEAC (92 aa)) enclose the SH2 2 domain. The residue at position 248 (Y248) is a Phosphotyrosine. Residues 255–337 (PNSSASNASG…KKLFLKRDNL (83 aa)) are interdomain B. A disordered region spans residues 260–309 (SNASGAAAPTLPAHPSTLTHPQRRIDTLNSDGYTPEPARITSPDKPRPMP). At S289 the chain carries Phosphoserine. The residue at position 292 (Y292) is a Phosphotyrosine. Y315 bears the Phosphotyrosine; by LCK mark. Position 319 is a phosphotyrosine (Y319). One can recognise a Protein kinase domain in the interval 338-600 (LIADIELGCG…QRMRACYYSL (263 aa)). Residues 345-352 (GCGNFGSV) and K369 contribute to the ATP site. The Proton acceptor role is filled by D461. Phosphotyrosine is present on residues Y492 and Y493. K544 is covalently cross-linked (Glycyl lysine isopeptide (Lys-Gly) (interchain with G-Cter in ubiquitin)). N6-acetyllysine is present on K603.

The protein belongs to the protein kinase superfamily. Tyr protein kinase family. SYK/ZAP-70 subfamily. Interacts with CD247/CD3Z; this interaction docks ZAP70 at the stimulated TCR. Interacts with NFAM1. Interacts with adapter protein SLA; this interaction negatively regulates T-cell receptor signaling. Interacts with FCRL3. Interacts with VAV1. Interacts with CBL; this interaction promotes ubiquitination, internalization and subsequent degradation of CD247/CD3Z. Identified in a complex with CBL and UBE2L3. Interacts with SHB. Interacts with adapter protein SLA2; this interaction negatively regulates T-cell receptor signaling. Interacts with CBLB. Interacts (via SH2 domains) with RHOH; this interaction regulates ZAP70 subcellular localization. Interacts with DEF6. Interacts (ubiquitinated form) with OTUD7B and UBASH3B. Phosphorylated on tyrosine residues upon T-cell antigen receptor (TCR) stimulation. Phosphorylation of Tyr-315 and Tyr-319 are essential for ZAP70 positive function on T-lymphocyte activation whereas Tyr-292 has a negative regulatory role. Within the C-terminal kinase domain, Tyr-492 and Tyr-493 are phosphorylated after TCR induction, Tyr-492 playing a negative regulatory role and Tyr-493 a positive. Tyr-493 is dephosphorylated by PTN22. Post-translationally, ubiquitinated in response to T cell activation. Deubiquitinated by OTUD7B. Expressed in T- and natural killer cells. Also present in early thymocytes and pro/pre B-cells.

Its subcellular location is the cytoplasm. The protein resides in the cell membrane. It catalyses the reaction L-tyrosyl-[protein] + ATP = O-phospho-L-tyrosyl-[protein] + ADP + H(+). Its activity is regulated as follows. Activated by phosphorylation at Tyr-493 in the activation loop. Inhibited by staurosporine. Its function is as follows. Tyrosine kinase that plays an essential role in regulation of the adaptive immune response. Regulates motility, adhesion and cytokine expression of mature T-cells, as well as thymocyte development. Also contributes to the development and activation of primary B-lymphocytes. When antigen presenting cells (APC) activate T-cell receptor (TCR), a serie of phosphorylations lead to the recruitment of ZAP70 to the doubly phosphorylated TCR component CD247/CD3Z through ITAM motif at the plasma membrane. This recruitment serves to localization to the stimulated TCR and to relieve its autoinhibited conformation. Release of ZAP70 active conformation is further stabilized by phosphorylation mediated by LCK. Subsequently, ZAP70 phosphorylates at least 2 essential adapter proteins: LAT and LCP2. In turn, a large number of signaling molecules are recruited and ultimately lead to lymphokine production, T-cell proliferation and differentiation. Furthermore, ZAP70 controls cytoskeleton modifications, adhesion and mobility of T-lymphocytes, thus ensuring correct delivery of effectors to the APC. ZAP70 is also required for TCR-CD247/CD3Z internalization and degradation through interaction with the E3 ubiquitin-protein ligase CBL and adapter proteins SLA and SLA2. Thus, ZAP70 regulates both T-cell activation switch on and switch off by modulating TCR expression at the T-cell surface. During thymocyte development, ZAP70 promotes survival and cell-cycle progression of developing thymocytes before positive selection (when cells are still CD4/CD8 double negative). Additionally, ZAP70-dependent signaling pathway may also contribute to primary B-cells formation and activation through B-cell receptor (BCR). The protein is Tyrosine-protein kinase ZAP-70 (ZAP70) of Homo sapiens (Human).